The primary structure comprises 442 residues: 3-phosphoshikimate 1-carboxyvinyltransferase (442 aa).

Residues K25, S26, and R30 each coordinate 3-phosphoshikimate. K25 contacts phosphoenolpyruvate. Residues G97 and R125 each contribute to the phosphoenolpyruvate site. S170, Q172, D323, and K350 together coordinate 3-phosphoshikimate. Q172 is a binding site for phosphoenolpyruvate. The active-site Proton acceptor is the D323. The phosphoenolpyruvate site is built by R354 and R399.

This sequence belongs to the EPSP synthase family. In terms of assembly, monomer.

It is found in the cytoplasm. The enzyme catalyses 3-phosphoshikimate + phosphoenolpyruvate = 5-O-(1-carboxyvinyl)-3-phosphoshikimate + phosphate. The protein operates within metabolic intermediate biosynthesis; chorismate biosynthesis; chorismate from D-erythrose 4-phosphate and phosphoenolpyruvate: step 6/7. Functionally, catalyzes the transfer of the enolpyruvyl moiety of phosphoenolpyruvate (PEP) to the 5-hydroxyl of shikimate-3-phosphate (S3P) to produce enolpyruvyl shikimate-3-phosphate and inorganic phosphate. The protein is 3-phosphoshikimate 1-carboxyvinyltransferase of Bartonella quintana (strain Toulouse) (Rochalimaea quintana).